We begin with the raw amino-acid sequence, 147 residues long: Large ribosomal subunit protein bL9 (147 aa).

This sequence belongs to the bacterial ribosomal protein bL9 family.

In terms of biological role, binds to the 23S rRNA. The chain is Large ribosomal subunit protein bL9 from Mycoplasma capricolum subsp. capricolum (strain California kid / ATCC 27343 / NCTC 10154).